Reading from the N-terminus, the 1024-residue chain is Translation initiation factor IF-2 (1024 aa).

The segment at 33–425 is disordered; that stretch reads SHMSSLEDDT…GRVKKTKTMK (393 aa). Basic and acidic residues-rich tracts occupy residues 43 to 62, 135 to 148, 167 to 198, and 223 to 263; these read EARVRESLHGMKNKQADTRV, TPEDPVVKATELKP, TPAKEEPTKAKEVPAAKEVPAAKEAPKVKETS, and SKPD…KEVR. Polar residues predominate over residues 316 to 325; sequence EATQAPTSPQ. Residues 332 to 350 are compositionally biased toward basic and acidic residues; the sequence is KPADKGPARAQAHRPDTGR. A compositionally biased stretch (basic residues) spans 365 to 375; it reads RSKKKEWKKKG. Positions 394–406 are enriched in basic and acidic residues; sequence SVVEGKDLYEKGR. A compositionally biased stretch (basic residues) spans 407–423; that stretch reads SGKKGRRKDGRVKKTKT. The tr-type G domain maps to 518 to 687; sequence SRPPVVTIMG…LLQSEVLELK (170 aa). The interval 527–534 is G1; that stretch reads GHVDHGKT. 527–534 is a GTP binding site; sequence GHVDHGKT. The tract at residues 552 to 556 is G2; it reads GITQH. A G3 region spans residues 573-576; sequence DTPG. Residues 573 to 577 and 627 to 630 contribute to the GTP site; these read DTPGH and NKMD. Residues 627 to 630 are G4; that stretch reads NKMD. Positions 663 to 665 are G5; that stretch reads SAK.

The protein belongs to the TRAFAC class translation factor GTPase superfamily. Classic translation factor GTPase family. IF-2 subfamily.

It localises to the cytoplasm. Functionally, one of the essential components for the initiation of protein synthesis. Protects formylmethionyl-tRNA from spontaneous hydrolysis and promotes its binding to the 30S ribosomal subunits. Also involved in the hydrolysis of GTP during the formation of the 70S ribosomal complex. The chain is Translation initiation factor IF-2 from Desulforapulum autotrophicum (strain ATCC 43914 / DSM 3382 / VKM B-1955 / HRM2) (Desulfobacterium autotrophicum).